A 150-amino-acid chain; its full sequence is UPF0756 membrane protein PMI1560 (150 aa).

A run of 4 helical transmembrane segments spans residues 16-36 (GLGI…LLVI), 51-71 (YGMT…IATG), 82-102 (FLNW…WLGA), and 123-143 (VIGV…AGIL).

This sequence belongs to the UPF0756 family.

It is found in the cell membrane. The chain is UPF0756 membrane protein PMI1560 from Proteus mirabilis (strain HI4320).